A 1361-amino-acid chain; its full sequence is Protein CFT1 (1361 aa).

Positions 455–493 (AAYNNEDDDDDDDDFNLYSDEENDQVNNKNDRTFGTNES) are disordered. Over residues 459-478 (NEDDDDDDDDFNLYSDEEND) the composition is skewed to acidic residues. The span at 479–493 (QVNNKNDRTFGTNES) shows a compositional bias: polar residues.

It belongs to the CFT1 family.

It is found in the nucleus. In terms of biological role, RNA-binding component of the cleavage and polyadenylation factor (CPF) complex, which plays a key role in polyadenylation-dependent pre-mRNA 3'-end formation and cooperates with cleavage factors including the CFIA complex and NAB4/CFIB. Involved in poly(A) site recognition. May be involved in coupling transcription termination and mRNA 3'-end formation. The polypeptide is Protein CFT1 (CFT1) (Candida glabrata (strain ATCC 2001 / BCRC 20586 / JCM 3761 / NBRC 0622 / NRRL Y-65 / CBS 138) (Yeast)).